The chain runs to 363 residues: UDP-N-acetylglucosamine--N-acetylmuramyl-(pentapeptide) pyrophosphoryl-undecaprenol N-acetylglucosamine transferase (363 aa).

UDP-N-acetyl-alpha-D-glucosamine contacts are provided by residues 10 to 12, N124, S195, and Q295; that span reads TGG.

The protein belongs to the glycosyltransferase 28 family. MurG subfamily.

Its subcellular location is the cell membrane. It catalyses the reaction di-trans,octa-cis-undecaprenyl diphospho-N-acetyl-alpha-D-muramoyl-L-alanyl-D-glutamyl-meso-2,6-diaminopimeloyl-D-alanyl-D-alanine + UDP-N-acetyl-alpha-D-glucosamine = di-trans,octa-cis-undecaprenyl diphospho-[N-acetyl-alpha-D-glucosaminyl-(1-&gt;4)]-N-acetyl-alpha-D-muramoyl-L-alanyl-D-glutamyl-meso-2,6-diaminopimeloyl-D-alanyl-D-alanine + UDP + H(+). It functions in the pathway cell wall biogenesis; peptidoglycan biosynthesis. In terms of biological role, cell wall formation. Catalyzes the transfer of a GlcNAc subunit on undecaprenyl-pyrophosphoryl-MurNAc-pentapeptide (lipid intermediate I) to form undecaprenyl-pyrophosphoryl-MurNAc-(pentapeptide)GlcNAc (lipid intermediate II). The polypeptide is UDP-N-acetylglucosamine--N-acetylmuramyl-(pentapeptide) pyrophosphoryl-undecaprenol N-acetylglucosamine transferase (Bacillus subtilis (strain 168)).